Reading from the N-terminus, the 482-residue chain is 3-isopropylmalate dehydratase large subunit (482 aa).

[4Fe-4S] cluster is bound by residues C353, C414, and C417.

Belongs to the aconitase/IPM isomerase family. LeuC type 1 subfamily. Heterodimer of LeuC and LeuD. [4Fe-4S] cluster serves as cofactor.

The catalysed reaction is (2R,3S)-3-isopropylmalate = (2S)-2-isopropylmalate. It participates in amino-acid biosynthesis; L-leucine biosynthesis; L-leucine from 3-methyl-2-oxobutanoate: step 2/4. Functionally, catalyzes the isomerization between 2-isopropylmalate and 3-isopropylmalate, via the formation of 2-isopropylmaleate. The sequence is that of 3-isopropylmalate dehydratase large subunit from Xanthomonas oryzae pv. oryzae (strain MAFF 311018).